The chain runs to 198 residues: 3-isopropylmalate dehydratase small subunit (198 aa).

This sequence belongs to the LeuD family. LeuD type 1 subfamily. As to quaternary structure, heterodimer of LeuC and LeuD.

The catalysed reaction is (2R,3S)-3-isopropylmalate = (2S)-2-isopropylmalate. It functions in the pathway amino-acid biosynthesis; L-leucine biosynthesis; L-leucine from 3-methyl-2-oxobutanoate: step 2/4. In terms of biological role, catalyzes the isomerization between 2-isopropylmalate and 3-isopropylmalate, via the formation of 2-isopropylmaleate. The chain is 3-isopropylmalate dehydratase small subunit from Mycolicibacterium paratuberculosis (strain ATCC BAA-968 / K-10) (Mycobacterium paratuberculosis).